The sequence spans 80 residues: MARKKASLDFEQSLADLQALVERLENGELSLEESLAAFEQGIALTRDCQGALAQAEQKVQILLERDGELAAQPFDAEPEA.

Belongs to the XseB family. As to quaternary structure, heterooligomer composed of large and small subunits.

The protein localises to the cytoplasm. The catalysed reaction is Exonucleolytic cleavage in either 5'- to 3'- or 3'- to 5'-direction to yield nucleoside 5'-phosphates.. Bidirectionally degrades single-stranded DNA into large acid-insoluble oligonucleotides, which are then degraded further into small acid-soluble oligonucleotides. The chain is Exodeoxyribonuclease 7 small subunit from Pseudomonas putida (strain ATCC 700007 / DSM 6899 / JCM 31910 / BCRC 17059 / LMG 24140 / F1).